Consider the following 539-residue polypeptide: Chitin deacetylase 1 (539 aa).

The first 23 residues, 1–23, serve as a signal peptide directing secretion; the sequence is MARYARVATLAACLLFACALADG. The Chitin-binding type-2 domain maps to 42–104; sequence QELCKDKDAG…WKDAVKNCKL (63 aa). 6 disulfide bridges follow: Cys-80-Cys-93, Cys-122-Cys-134, Cys-129-Cys-147, Cys-141-Cys-156, Cys-168-Cys-180, and Cys-173-Cys-178. The LDL-receptor class A domain maps to 121-157; that stretch reads LCQDGFLACGDSTCIERGLFCNGEKDCGDGSDENSCD. Asp-206 serves as a coordination point for Zn(2+). 5 cysteine pairs are disulfide-bonded: Cys-230/Cys-489, Cys-354/Cys-361, Cys-391/Cys-397, Cys-497/Cys-520, and Cys-503/Cys-523. An N-linked (GlcNAc...) asparagine glycan is attached at Asn-244. Residues His-261 and His-265 each coordinate Zn(2+). A glycan (N-linked (GlcNAc...) asparagine) is linked at Asn-296.

It belongs to the carbohydrate esterase 4 (CE4) family. Interacts with CPAP3-A1. Zn(2+) is required as a cofactor. Highly expressed in epidermis and head. Moderate expression levels in fat body, Malpighian tubule, testis and midgut. Low expression in silk gland and ovary.

It is found in the secreted. The catalysed reaction is [(1-&gt;4)-N-acetyl-beta-D-glucosaminyl](n) + n H2O = chitosan + n acetate. With respect to regulation, binding to the accessory protein CPAP3-A1 is essential for chitinase activity. Hydrolyzes the N-acetamido groups of N-acetyl-D-glucosamine residues in chitin. The chain is Chitin deacetylase 1 from Bombyx mori (Silk moth).